A 215-amino-acid chain; its full sequence is Octanoyltransferase (215 aa).

Positions 31–206 (TTAPDEIWLV…QLVKHLDYAE (176 aa)) constitute a BPL/LPL catalytic domain. Residues 70 to 77 (RGGQVTYH), 137 to 139 (SLG), and 150 to 152 (GLA) each bind substrate. Catalysis depends on Cys-168, which acts as the Acyl-thioester intermediate.

It belongs to the LipB family.

It localises to the cytoplasm. The catalysed reaction is octanoyl-[ACP] + L-lysyl-[protein] = N(6)-octanoyl-L-lysyl-[protein] + holo-[ACP] + H(+). Its pathway is protein modification; protein lipoylation via endogenous pathway; protein N(6)-(lipoyl)lysine from octanoyl-[acyl-carrier-protein]: step 1/2. Catalyzes the transfer of endogenously produced octanoic acid from octanoyl-acyl-carrier-protein onto the lipoyl domains of lipoate-dependent enzymes. Lipoyl-ACP can also act as a substrate although octanoyl-ACP is likely to be the physiological substrate. The polypeptide is Octanoyltransferase (Pseudomonas fluorescens (strain Pf0-1)).